A 249-amino-acid polypeptide reads, in one-letter code: Deoxyribose-phosphate aldolase (249 aa).

The active-site Proton donor/acceptor is Asp-109. Lys-171 functions as the Schiff-base intermediate with acetaldehyde in the catalytic mechanism. Catalysis depends on Lys-200, which acts as the Proton donor/acceptor.

Belongs to the DeoC/FbaB aldolase family. DeoC type 1 subfamily.

It localises to the cytoplasm. It carries out the reaction 2-deoxy-D-ribose 5-phosphate = D-glyceraldehyde 3-phosphate + acetaldehyde. Its pathway is carbohydrate degradation; 2-deoxy-D-ribose 1-phosphate degradation; D-glyceraldehyde 3-phosphate and acetaldehyde from 2-deoxy-alpha-D-ribose 1-phosphate: step 2/2. In terms of biological role, catalyzes a reversible aldol reaction between acetaldehyde and D-glyceraldehyde 3-phosphate to generate 2-deoxy-D-ribose 5-phosphate. In Klebsiella pneumoniae subsp. pneumoniae (strain ATCC 700721 / MGH 78578), this protein is Deoxyribose-phosphate aldolase.